A 449-amino-acid polypeptide reads, in one-letter code: Tubulin beta chain (449 aa).

Glutamine 11, glutamate 69, serine 138, glycine 142, threonine 143, glycine 144, asparagine 204, and asparagine 226 together coordinate GTP. Glutamate 69 contacts Mg(2+).

It belongs to the tubulin family. As to quaternary structure, dimer of alpha and beta chains. A typical microtubule is a hollow water-filled tube with an outer diameter of 25 nm and an inner diameter of 15 nM. Alpha-beta heterodimers associate head-to-tail to form protofilaments running lengthwise along the microtubule wall with the beta-tubulin subunit facing the microtubule plus end conferring a structural polarity. Microtubules usually have 13 protofilaments but different protofilament numbers can be found in some organisms and specialized cells. Mg(2+) serves as cofactor.

Its subcellular location is the cytoplasm. The protein localises to the cytoskeleton. In terms of biological role, tubulin is the major constituent of microtubules, a cylinder consisting of laterally associated linear protofilaments composed of alpha- and beta-tubulin heterodimers. Microtubules grow by the addition of GTP-tubulin dimers to the microtubule end, where a stabilizing cap forms. Below the cap, tubulin dimers are in GDP-bound state, owing to GTPase activity of alpha-tubulin. In Candida albicans (Yeast), this protein is Tubulin beta chain (TUB2).